The sequence spans 689 residues: Elongation factor G (689 aa).

One can recognise a tr-type G domain in the interval 9–283 (AKFRNIGIMA…AIIEFMPSPL (275 aa)). GTP is bound by residues 18–25 (AHIDAGKT), 82–86 (DTPGH), and 136–139 (NKMD).

Belongs to the TRAFAC class translation factor GTPase superfamily. Classic translation factor GTPase family. EF-G/EF-2 subfamily.

It localises to the cytoplasm. Catalyzes the GTP-dependent ribosomal translocation step during translation elongation. During this step, the ribosome changes from the pre-translocational (PRE) to the post-translocational (POST) state as the newly formed A-site-bound peptidyl-tRNA and P-site-bound deacylated tRNA move to the P and E sites, respectively. Catalyzes the coordinated movement of the two tRNA molecules, the mRNA and conformational changes in the ribosome. This is Elongation factor G from Clostridium botulinum (strain Okra / Type B1).